A 796-amino-acid chain; its full sequence is Transcription factor kayak (796 aa).

Disordered regions lie at residues 109–132 (AYQQ…SNTS), 315–341 (VVNN…SNTV), 374–429 (FNCG…GSNG), and 442–490 (VGSA…RNKL). A compositionally biased stretch (low complexity) spans 402–429 (TTDTSSAATDSTSYQNGGHMFGNNGSNG). Residues 447 to 457 (RGTSSTSNNAT) are compositionally biased toward polar residues. The bZIP domain occupies 478-541 (EEKRRVRRER…HQLNFVLEAH (64 aa)). The segment at 480–499 (KRRVRRERNKLAAARCRKRR) is basic motif. Residues 506–534 (LSEEVDGLLKKNEDLKKEIEILTNTRHQL) form a leucine-zipper region. The segment at 569–601 (SSGSNGSHHHNSNSNNSNNNNSNNNNNSNSNDS) is disordered. At S621 the chain carries Phosphoserine. Disordered stretches follow at residues 642–661 (PHDA…PPAA) and 774–796 (SSQN…LVSL).

This sequence belongs to the bZIP family. Fos subfamily. As to quaternary structure, homodimer. Heterodimer with Jra. The kay-Jra heterodimer binds more stably to the AP-1 site than either of the two proteins alone.

The protein resides in the nucleus. Developmentally regulated transcription factor AP-1 binds and recognizes the enhancer DNA sequence: 5'-TGA[CG]TCA-3'. May play a role in the function or determination of a particular subset of cells in the developing embryo. It is able to carry out its function either independently of or in conjunction with Jra. The chain is Transcription factor kayak from Drosophila grimshawi (Hawaiian fruit fly).